The sequence spans 179 residues: Molybdopterin synthase catalytic subunit (179 aa).

The span at 1–10 (MTTSEDQTTP) shows a compositional bias: polar residues. Residues 1-21 (MTTSEDQTTPAHLDPKTYPRH) form a disordered region. Substrate contacts are provided by residues 127-128 (HR), K143, and 150-152 (KRE).

It belongs to the MoaE family. MOCS2B subfamily. In terms of assembly, heterotetramer; composed of 2 small (MOCS2A) and 2 large (MOCS2B) subunits.

It is found in the cytoplasm. It carries out the reaction 2 [molybdopterin-synthase sulfur-carrier protein]-C-terminal-Gly-aminoethanethioate + cyclic pyranopterin phosphate + H2O = molybdopterin + 2 [molybdopterin-synthase sulfur-carrier protein]-C-terminal Gly-Gly + 2 H(+). It functions in the pathway cofactor biosynthesis; molybdopterin biosynthesis. Catalytic subunit of the molybdopterin synthase complex, a complex that catalyzes the conversion of precursor Z into molybdopterin. Acts by mediating the incorporation of 2 sulfur atoms from thiocarboxylated MOCS2A into precursor Z to generate a dithiolene group. This is Molybdopterin synthase catalytic subunit from Aspergillus oryzae (strain ATCC 42149 / RIB 40) (Yellow koji mold).